A 273-amino-acid polypeptide reads, in one-letter code: Short-chain dehydrogenase fogB (273 aa).

NADP(+) is bound by residues I16, D66, R128, Y174, K178, V207, and T209. The active-site Proton donor is the Y174. K178 serves as the catalytic Lowers pKa of active site Tyr.

The protein belongs to the short-chain dehydrogenases/reductases (SDR) family.

In terms of biological role, short-chain dehydrogenase; part of the gene cluster that mediates the biosynthesis of flavoglaucin and congeners (including aspergin, dihydroauroglaucin and auroglaucin), prenylated salicylaldehyde derivatives carrying a saturated or an unsaturated C-7 side chain. The PKS fogA releases the carboxylic acid (8E,10E,12E)-3,5,7-trihydroxytetradeca-8,10,12-trienoic acid as its product, as well as derivatives with one and two double bonds. FogA is indeed able to reduce the initial triketide, thus being at least partially responsible for the differently saturated heptyl side chains of flavoglaucin congeners. The oxidoreductases fogB, fogC and fogD modify the nascent polyketide in fogA-bound form and, together, fogA, fogB, fogC and fogD are necessary for the formation of the aromatic core and the cyclized PKS products are released as salicyl alcohols. In particular, fogB is responsible for oxidation of a hydroxyl group or reduction of remaining double bond(s) at the C-7 residue whereas fogD is probably involved in the reductive release of the modified PKS products. The cytochrome P450 monooxygenase fogE is then responsible for the hydroxylation at C-3 of the benzene ring. The fogE products are substrates of the prenyltransferase fogH and the prenylated benzyl alcohols are subsequently oxidized by the fogF to produce the final aryl aldehydes flavoglaucin and congeners. The short-chain dehydrogenase fogG does not seem to be involved in the biosynthesis of the prenylated salicylaldehyde derivatives. The protein is Short-chain dehydrogenase fogB of Aspergillus ruber (strain CBS 135680).